We begin with the raw amino-acid sequence, 282 residues long: Bifunctional protein FolD (282 aa).

NADP(+) is bound by residues 164–166 (GRS) and Ser189.

Belongs to the tetrahydrofolate dehydrogenase/cyclohydrolase family. As to quaternary structure, homodimer.

The enzyme catalyses (6R)-5,10-methylene-5,6,7,8-tetrahydrofolate + NADP(+) = (6R)-5,10-methenyltetrahydrofolate + NADPH. It catalyses the reaction (6R)-5,10-methenyltetrahydrofolate + H2O = (6R)-10-formyltetrahydrofolate + H(+). Its pathway is one-carbon metabolism; tetrahydrofolate interconversion. Functionally, catalyzes the oxidation of 5,10-methylenetetrahydrofolate to 5,10-methenyltetrahydrofolate and then the hydrolysis of 5,10-methenyltetrahydrofolate to 10-formyltetrahydrofolate. This is Bifunctional protein FolD from Lactobacillus helveticus (strain DPC 4571).